A 584-amino-acid polypeptide reads, in one-letter code: ATP-dependent RNA helicase MRH4, mitochondrial (584 aa).

The N-terminal 49 residues, 1–49 (MQPVFSRFPYASKSGFISLASRGYAVSRNSGSSIKSNLRSKPRADTRWN), are a transit peptide targeting the mitochondrion. Over residues 28–39 (RNSGSSIKSNLR) the composition is skewed to polar residues. Residues 28-92 (RNSGSSIKSN…QTQQQFQYGE (65 aa)) form a disordered region. The segment covering 63–79 (GKGDHRSHSRSDSRAKP) has biased composition (basic and acidic residues). Positions 162 to 169 (HLKPSPIQ) match the Q motif motif. Residues 179–366 (TLMDPQLQVR…TRLFPTVGVI (188 aa)) enclose the Helicase ATP-binding domain. ATP is bound at residue 192–199 (AETGSGKT). Residues 314-317 (DEAD) carry the DEAD box motif. One can recognise a Helicase C-terminal domain in the interval 397–584 (ALAQILYSIN…SIVSKNVSIS (188 aa)).

The protein belongs to the DEAD box helicase family. MRH4 subfamily.

It is found in the mitochondrion. The catalysed reaction is ATP + H2O = ADP + phosphate + H(+). In terms of biological role, ATP-binding RNA helicase involved in mitochondrial RNA metabolism. Required for maintenance of mitochondrial DNA. The sequence is that of ATP-dependent RNA helicase MRH4, mitochondrial (MRH4) from Kluyveromyces lactis (strain ATCC 8585 / CBS 2359 / DSM 70799 / NBRC 1267 / NRRL Y-1140 / WM37) (Yeast).